The following is a 658-amino-acid chain: Threonine--tRNA ligase (658 aa).

The region spanning 1–64 (MSNTVSLQFP…GASGKVEIIT (64 aa)) is the TGS domain. A catalytic region spans residues 246–548 (DHRRLGREMD…LIENFAGHMP (303 aa)). Zn(2+)-binding residues include Cys-343, His-394, and His-525.

This sequence belongs to the class-II aminoacyl-tRNA synthetase family. In terms of assembly, homodimer. Requires Zn(2+) as cofactor.

It is found in the cytoplasm. The enzyme catalyses tRNA(Thr) + L-threonine + ATP = L-threonyl-tRNA(Thr) + AMP + diphosphate + H(+). In terms of biological role, catalyzes the attachment of threonine to tRNA(Thr) in a two-step reaction: L-threonine is first activated by ATP to form Thr-AMP and then transferred to the acceptor end of tRNA(Thr). Also edits incorrectly charged L-seryl-tRNA(Thr). This chain is Threonine--tRNA ligase, found in Brucella melitensis biotype 1 (strain ATCC 23456 / CCUG 17765 / NCTC 10094 / 16M).